The following is a 440-amino-acid chain: Streptokinase C (440 aa).

An N-terminal signal peptide occupies residues 1 to 26; it reads MKNYLSFGMFALLFALTFGTVNSVQA.

In terms of biological role, this protein is not a protease, but it activates plasminogen by complexing with it. As a potential virulence factor, it is thought to prevent the formation of effective fibrin barriers around the site of infection, thereby contributing to the invasiveness of the cells. In Streptococcus dysgalactiae subsp. equisimilis (Streptococcus equisimilis), this protein is Streptokinase C (skc).